The primary structure comprises 141 residues: Putative pre-16S rRNA nuclease (141 aa).

The protein belongs to the YqgF nuclease family.

The protein resides in the cytoplasm. Functionally, could be a nuclease involved in processing of the 5'-end of pre-16S rRNA. This is Putative pre-16S rRNA nuclease from Vibrio parahaemolyticus serotype O3:K6 (strain RIMD 2210633).